The sequence spans 280 residues: Undecaprenyl-diphosphatase (280 aa).

A run of 8 helical transmembrane segments spans residues 3 to 23 (IILL…EFLP), 45 to 65 (VDLF…YDYW), 88 to 108 (QLGL…FTFA), 115 to 135 (LFDP…IFYV), 150 to 170 (VGLK…IPGT), 191 to 211 (AEFS…LDLL), 225 to 245 (VLGI…RLLV), and 255 to 275 (IFAW…WGFG).

It belongs to the UppP family.

It is found in the cell inner membrane. The catalysed reaction is di-trans,octa-cis-undecaprenyl diphosphate + H2O = di-trans,octa-cis-undecaprenyl phosphate + phosphate + H(+). Functionally, catalyzes the dephosphorylation of undecaprenyl diphosphate (UPP). Confers resistance to bacitracin. This chain is Undecaprenyl-diphosphatase, found in Psychrobacter arcticus (strain DSM 17307 / VKM B-2377 / 273-4).